The sequence spans 471 residues: tRNA-2-methylthio-N(6)-dimethylallyladenosine synthase (471 aa).

The region spanning 36–154 (KTYHIITYGC…FPQLLYKAIT (119 aa)) is the MTTase N-terminal domain. The [4Fe-4S] cluster site is built by Cys-45, Cys-81, Cys-115, Cys-191, Cys-195, and Cys-198. Residues 177–407 (RREGVSAFVN…VKLVEEIALK (231 aa)) enclose the Radical SAM core domain. One can recognise a TRAM domain in the interval 410–471 (QQMLGKVCEI…SRHWLYGEVI (62 aa)).

It belongs to the methylthiotransferase family. MiaB subfamily. In terms of assembly, monomer. [4Fe-4S] cluster serves as cofactor.

It is found in the cytoplasm. The catalysed reaction is N(6)-dimethylallyladenosine(37) in tRNA + (sulfur carrier)-SH + AH2 + 2 S-adenosyl-L-methionine = 2-methylsulfanyl-N(6)-dimethylallyladenosine(37) in tRNA + (sulfur carrier)-H + 5'-deoxyadenosine + L-methionine + A + S-adenosyl-L-homocysteine + 2 H(+). Catalyzes the methylthiolation of N6-(dimethylallyl)adenosine (i(6)A), leading to the formation of 2-methylthio-N6-(dimethylallyl)adenosine (ms(2)i(6)A) at position 37 in tRNAs that read codons beginning with uridine. The protein is tRNA-2-methylthio-N(6)-dimethylallyladenosine synthase of Caldicellulosiruptor saccharolyticus (strain ATCC 43494 / DSM 8903 / Tp8T 6331).